We begin with the raw amino-acid sequence, 275 residues long: Biotin synthase (275 aa).

Residues 1–217 (MLCAICNVSS…DTAKTLPQCR (217 aa)) enclose the Radical SAM core domain. Residues cysteine 13, cysteine 17, and cysteine 20 each contribute to the [4Fe-4S] cluster site. The [2Fe-2S] cluster site is built by cysteine 57, cysteine 92, cysteine 150, and arginine 217.

The protein belongs to the radical SAM superfamily. Biotin synthase family. As to quaternary structure, homodimer. [4Fe-4S] cluster is required as a cofactor. It depends on [2Fe-2S] cluster as a cofactor.

The enzyme catalyses (4R,5S)-dethiobiotin + (sulfur carrier)-SH + 2 reduced [2Fe-2S]-[ferredoxin] + 2 S-adenosyl-L-methionine = (sulfur carrier)-H + biotin + 2 5'-deoxyadenosine + 2 L-methionine + 2 oxidized [2Fe-2S]-[ferredoxin]. Its pathway is cofactor biosynthesis; biotin biosynthesis; biotin from 7,8-diaminononanoate: step 2/2. Catalyzes the conversion of dethiobiotin (DTB) to biotin by the insertion of a sulfur atom into dethiobiotin via a radical-based mechanism. The sequence is that of Biotin synthase from Campylobacter fetus subsp. fetus (strain 82-40).